The following is a 541-amino-acid chain: Multidrug transporter protein MdtP (541 aa).

The next 14 helical transmembrane spans lie at 14–34, 40–60, 79–99, 112–132, 141–161, 168–188, 201–221, 229–249, 273–293, 307–327, 329–349, 359–379, 401–420, and 492–512; these read LLITGLIIAMFFSALDGTIVG, IVGDLGGLSMMTWLTTAYLLT, IVYVSGLIIFMAASALCGMAN, GIGGGIMMPMAMIVIGDLFTG, VFGAIYGLASVIGPQIGGWIV, WVFYINLPVGIIAVIFIARGL, IAGIFTMIVGVVSLLLALSFG, SWQILGLFALALIGIVSFIIV, LIGFFMSIGMFGAITFVPFFM, IMTPMMISMIITSIIGGQLVY, IGIKPQIITGMLVMAGGFLLL, LVATSFMAIIGLGMGLVMPIL, FFRSIGGTFGITMLGAVMNA, and LHSVFYTGLIFIAVGAVFTLF.

This sequence belongs to the major facilitator superfamily. EmrB family.

It is found in the cell membrane. In terms of biological role, multidrug efflux transporter. Contributes to resistance to several antibiotics, including fusidic acid, novobiocin, streptomycin and actinomycin, possibly by pumping these structurally unrelated antibiotics out of cells. In Bacillus subtilis (strain 168), this protein is Multidrug transporter protein MdtP.